The primary structure comprises 544 residues: Membrane protein insertase YidC (544 aa).

Transmembrane regions (helical) follow at residues 15 to 35 (LFLIGLFMLINDIFSSIMLSF), 321 to 341 (LWYLIQVPMQMVMQVFYDVIP), 343 to 363 (WGLSIIFLTIVVRILIFPLTF), 409 to 429 (LGGCFPVILQLPIFFALYSLV), and 506 to 526 (MPIMFFFILYNMPSGLLIYWI).

The protein belongs to the OXA1/ALB3/YidC family. Type 1 subfamily. As to quaternary structure, interacts with the Sec translocase complex via SecD. Specifically interacts with transmembrane segments of nascent integral membrane proteins during membrane integration.

The protein localises to the cell inner membrane. Its function is as follows. Required for the insertion and/or proper folding and/or complex formation of integral membrane proteins into the membrane. Involved in integration of membrane proteins that insert both dependently and independently of the Sec translocase complex, as well as at least some lipoproteins. Aids folding of multispanning membrane proteins. The polypeptide is Membrane protein insertase YidC (Borrelia garinii subsp. bavariensis (strain ATCC BAA-2496 / DSM 23469 / PBi) (Borreliella bavariensis)).